The primary structure comprises 197 residues: Translation machinery-associated protein 22 (197 aa).

The 72-residue stretch at 103–174 folds into the SUI1 domain; sequence IRIKRVERNK…DVREFLIKNY (72 aa).

The protein belongs to the DENR family. Interacts with the 40S ribosomal subunit.

Its subcellular location is the cytoplasm. This is Translation machinery-associated protein 22 (tma22) from Botryotinia fuckeliana (strain B05.10) (Noble rot fungus).